A 465-amino-acid chain; its full sequence is Argininosuccinate lyase (465 aa).

Belongs to the lyase 1 family. Argininosuccinate lyase subfamily.

The protein resides in the cytoplasm. The enzyme catalyses 2-(N(omega)-L-arginino)succinate = fumarate + L-arginine. It functions in the pathway amino-acid biosynthesis; L-arginine biosynthesis; L-arginine from L-ornithine and carbamoyl phosphate: step 3/3. The sequence is that of Argininosuccinate lyase from Methanosphaera stadtmanae (strain ATCC 43021 / DSM 3091 / JCM 11832 / MCB-3).